We begin with the raw amino-acid sequence, 247 residues long: V-type proton ATPase subunit D (247 aa).

It belongs to the V-ATPase D subunit family. As to quaternary structure, V-ATPase is a heteromultimeric enzyme made up of two complexes: the ATP-hydrolytic V1 complex and the proton translocation V0 complex. The V1 complex consists of three catalytic AB heterodimers that form a heterohexamer, three peripheral stalks each consisting of EG heterodimers, one central rotor including subunits D and F, and the regulatory subunits C and H. The proton translocation complex V0 consists of the proton transport subunit a, a ring of proteolipid subunits c9c'', rotary subunit d, subunits e and f, and the accessory subunits ATP6AP1/Ac45 and ATP6AP2/PRR. Interacts with SNX10.

The protein localises to the membrane. The protein resides in the cytoplasmic vesicle. It is found in the clathrin-coated vesicle membrane. Its subcellular location is the cytoplasm. It localises to the cytoskeleton. The protein localises to the microtubule organizing center. The protein resides in the centrosome. It is found in the cell projection. Its subcellular location is the cilium. Its function is as follows. Subunit of the V1 complex of vacuolar(H+)-ATPase (V-ATPase), a multisubunit enzyme composed of a peripheral complex (V1) that hydrolyzes ATP and a membrane integral complex (V0) that translocates protons. V-ATPase is responsible for acidifying and maintaining the pH of intracellular compartments and in some cell types, is targeted to the plasma membrane, where it is responsible for acidifying the extracellular environment. May play a role in cilium biogenesis through regulation of the transport and the localization of proteins to the cilium. This Homo sapiens (Human) protein is V-type proton ATPase subunit D (ATP6V1D).